Consider the following 435-residue polypeptide: MLCSSFSVSRLAIPAVCILIAFLAYTSQIFFLYFEDAPLKEDEVWRINILAICIWICYYRACTVDPGHVPKGWMPSDRERLKADRASGRQRWCRRCEAYKPPRAHHCKTCERCVPKMDHHCPWTSNCVSHFTFPHFARFLFYAVVGIAYLETRLWQRVSKVWGSRHLPSYLGPSMGQIGHLFVLFVTNSLTLFALSLLLLRTLWSLGSNTTTIESWEIERHETLLRRARRLGGSLPGPGGISVHITKQEFPYDIGIWSNIRAGMGGSANVLSWFWPLARTPDRSTGLEFEENGFEDPTVSWPPPDPDRIPLPPMDQRDSFMYDITDTSGTSGQIDIEAFNRRKEADLRRRRAPTEIERRKPFHVRLEEYSNGSSDAEADTGSDDDSDHGEEGWKNSEGERLRDFGVDEEAEFYDEEDIPLALLIQQRAKRQHLSQ.

The Cytoplasmic segment spans residues 1-10 (MLCSSFSVSR). A helical membrane pass occupies residues 11–31 (LAIPAVCILIAFLAYTSQIFF). At 32–48 (LYFEDAPLKEDEVWRIN) the chain is on the lumenal side. The helical transmembrane segment at 49–69 (ILAICIWICYYRACTVDPGHV) threads the bilayer. Over 70–129 (PKGWMPSDRERLKADRASGRQRWCRRCEAYKPPRAHHCKTCERCVPKMDHHCPWTSNCVS) the chain is Cytoplasmic. In terms of domain architecture, DHHC spans 91–141 (RWCRRCEAYKPPRAHHCKTCERCVPKMDHHCPWTSNCVSHFTFPHFARFLF). The active-site S-palmitoyl cysteine intermediate is the Cys121. The chain crosses the membrane as a helical span at residues 130–150 (HFTFPHFARFLFYAVVGIAYL). The Lumenal portion of the chain corresponds to 151-179 (ETRLWQRVSKVWGSRHLPSYLGPSMGQIG). Residues 180-200 (HLFVLFVTNSLTLFALSLLLL) form a helical membrane-spanning segment. The Cytoplasmic portion of the chain corresponds to 201–435 (RTLWSLGSNT…QRAKRQHLSQ (235 aa)). The segment covering 359 to 368 (RKPFHVRLEE) has biased composition (basic and acidic residues). The disordered stretch occupies residues 359–408 (RKPFHVRLEEYSNGSSDAEADTGSDDDSDHGEEGWKNSEGERLRDFGVDE). The span at 376-388 (AEADTGSDDDSDH) shows a compositional bias: acidic residues. Residues 389-405 (GEEGWKNSEGERLRDFG) are compositionally biased toward basic and acidic residues.

The protein belongs to the DHHC palmitoyltransferase family. PFA4 subfamily.

The protein resides in the endoplasmic reticulum membrane. It carries out the reaction L-cysteinyl-[protein] + hexadecanoyl-CoA = S-hexadecanoyl-L-cysteinyl-[protein] + CoA. Its function is as follows. Mediates the reversible addition of palmitate to target proteins, thereby regulating their membrane association and biological function. This chain is Palmitoyltransferase pfa4, found in Emericella nidulans (strain FGSC A4 / ATCC 38163 / CBS 112.46 / NRRL 194 / M139) (Aspergillus nidulans).